Consider the following 306-residue polypeptide: Ethylmalonyl-CoA decarboxylase (306 aa).

Lys216 bears the N6-acetyllysine; alternate mark. Lys216 carries the post-translational modification N6-succinyllysine; alternate.

Belongs to the enoyl-CoA hydratase/isomerase family.

It is found in the cytoplasm. It localises to the cytosol. The enzyme catalyses (2S)-ethylmalonyl-CoA + H(+) = butanoyl-CoA + CO2. It catalyses the reaction (S)-methylmalonyl-CoA + H(+) = propanoyl-CoA + CO2. It carries out the reaction (2R)-ethylmalonyl-CoA + H(+) = butanoyl-CoA + CO2. Decarboxylates ethylmalonyl-CoA, a potentially toxic metabolite, to form butyryl-CoA, suggesting it might be involved in metabolite proofreading. Acts preferentially on (S)-ethylmalonyl-CoA but also has some activity on the (R)-isomer. Also has methylmalonyl-CoA decarboxylase activity at lower level. This Bos taurus (Bovine) protein is Ethylmalonyl-CoA decarboxylase (ECHDC1).